Here is a 731-residue protein sequence, read N- to C-terminus: Catalase-peroxidase (731 aa).

The tryptophyl-tyrosyl-methioninium (Trp-Tyr) (with M-254) cross-link spans 98–227; the sequence is WHAAGTYRTA…LAAIQMGLIY (130 aa). Catalysis depends on His-99, which acts as the Proton acceptor. Residues 227–254 constitute a cross-link (tryptophyl-tyrosyl-methioninium (Tyr-Met) (with W-98)); the sequence is YVNPEGPQGNPHDDEGMARDMKETFKRM. Position 269 (His-269) interacts with heme b.

Belongs to the peroxidase family. Peroxidase/catalase subfamily. Homodimer or homotetramer. The cofactor is heme b. Post-translationally, formation of the three residue Trp-Tyr-Met cross-link is important for the catalase, but not the peroxidase activity of the enzyme.

It catalyses the reaction H2O2 + AH2 = A + 2 H2O. It carries out the reaction 2 H2O2 = O2 + 2 H2O. Bifunctional enzyme with both catalase and broad-spectrum peroxidase activity. The protein is Catalase-peroxidase of Sphingopyxis alaskensis (strain DSM 13593 / LMG 18877 / RB2256) (Sphingomonas alaskensis).